A 597-amino-acid chain; its full sequence is MSSTVNNGAASMQSTPDAANGFPQPSSSSGTWPRAEEELRAAEPGLVKRAHREILDHERKRRVELKCMELQEMMEEQGYSEEEIRQKVGTFRQMLMEKEGVLTREDRPGGHIVAETPRLTEGAEPGLEYAPFDDDDGPVDCDCPASCYRGHRGYRTKHWSSSSASPPPKKKKKKKGGHRRSRKKRRLESECSCGSSSPLRKKKKSVKKHRRDRSDSGSRRKRRHRSRSSKCKRKEKNKEKKRPHTESPGRRSHRHSSGSSHSPSLSSHYSDSRSPSRLSPKHRDEGRKTGSQRSSGSRSPSPSGGSGWGSPQRNGGSGQRSGAHGGRPGSAHSPPDKPSSPSPRVRDKAAAAAPTPPARGKESPSPRSAPSSQGRGGRAAGGAGRRRRRRRRRRRSRSSASAPRRRGRRRPRPAPPRGSSRSLSRARSSSDSGSGRGAPGPGPEPGSERGHGGHGKRAKERPPRARPASTSPSPGAHGRRGGPEGKSSSRSPGPHPRSWSSSRSPSKSRSRSAEKRPHSPSRSPSPKKPLSRDKDGEGRARHSEAEATRARRRSRSYSPIRKRRRDSPSFMEPRRITSAASVLFHTTGPAPLPPPAA.

Residues 1–31 show a composition bias toward polar residues; that stretch reads MSSTVNNGAASMQSTPDAANGFPQPSSSSGT. The interval 1–47 is disordered; it reads MSSTVNNGAASMQSTPDAANGFPQPSSSSGTWPRAEEELRAAEPGLV. The CWF21 domain maps to 55–98; the sequence is LDHERKRRVELKCMELQEMMEEQGYSEEEIRQKVGTFRQMLMEK. Over residues 99–109 the composition is skewed to basic and acidic residues; it reads EGVLTREDRPG. Residues 99–597 form a disordered region; that stretch reads EGVLTREDRP…GPAPLPPPAA (499 aa). Basic residues-rich tracts occupy residues 149–158, 168–186, 199–211, and 219–243; these read RGHRGYRTKH, PKKKKKKKGGHRRSRKKRR, LRKKKKSVKKHRR, and RRKRRHRSRSSKCKRKEKNKEKKRP. 2 stretches are compositionally biased toward low complexity: residues 257–278 and 291–313; these read SGSSHSPSLSSHYSDSRSPSRL and SQRSSGSRSPSPSGGSGWGSPQR. 2 stretches are compositionally biased toward gly residues: residues 315–328 and 374–383; these read GGSGQRSGAHGGRP and GRGGRAAGGA. Over residues 384 to 412 the composition is skewed to basic residues; sequence GRRRRRRRRRRRSRSSASAPRRRGRRRPR. 3 stretches are compositionally biased toward low complexity: residues 417-433, 466-476, and 488-507; these read RGSSRSLSRARSSSDSG, RPASTSPSPGA, and SSRSPGPHPRSWSSSRSPSK. A compositionally biased stretch (basic and acidic residues) spans 530-549; sequence LSRDKDGEGRARHSEAEATR. Over residues 550-565 the composition is skewed to basic residues; that stretch reads ARRRSRSYSPIRKRRR.

It belongs to the CWC21 family. In terms of tissue distribution, expressed in breast cancer cell lines.

In terms of biological role, may play a role in regulating breast cancer cell invasiveness. May be involved in RYBP-mediated breast cancer progression. In Homo sapiens (Human), this protein is Serine/arginine repetitive matrix protein 3 (SRRM3).